We begin with the raw amino-acid sequence, 483 residues long: Acetyl-coenzyme A carboxylase carboxyl transferase subunit beta, chloroplastic (483 aa).

A CoA carboxyltransferase N-terminal domain is found at 221–483; that stretch reads LWVQCENCYG…FQFHGFFPRP (263 aa). Zn(2+) is bound by residues Cys225, Cys228, Cys244, and Cys247. Residues 225 to 247 form a C4-type zinc finger; the sequence is CENCYGLNYKKFFSSKMNICEQC.

It belongs to the AccD/PCCB family. In terms of assembly, acetyl-CoA carboxylase is a heterohexamer composed of biotin carboxyl carrier protein, biotin carboxylase and 2 subunits each of ACCase subunit alpha and ACCase plastid-coded subunit beta (accD). Requires Zn(2+) as cofactor.

The protein resides in the plastid. The protein localises to the chloroplast stroma. The enzyme catalyses N(6)-carboxybiotinyl-L-lysyl-[protein] + acetyl-CoA = N(6)-biotinyl-L-lysyl-[protein] + malonyl-CoA. The protein operates within lipid metabolism; malonyl-CoA biosynthesis; malonyl-CoA from acetyl-CoA: step 1/1. Its function is as follows. Component of the acetyl coenzyme A carboxylase (ACC) complex. Biotin carboxylase (BC) catalyzes the carboxylation of biotin on its carrier protein (BCCP) and then the CO(2) group is transferred by the transcarboxylase to acetyl-CoA to form malonyl-CoA. The chain is Acetyl-coenzyme A carboxylase carboxyl transferase subunit beta, chloroplastic from Nuphar advena (Common spatterdock).